A 384-amino-acid polypeptide reads, in one-letter code: Na(+)/H(+) antiporter NhaA (384 aa).

The next 11 membrane-spanning stretches (helical) occupy residues 9–29 (NLET…IIIA), 58–78 (LLLW…GLEI), 94–114 (LVPA…FIFF), 124–144 (GWAI…SLLG), 153–173 (ILLT…IALF), 179–199 (SLLS…LNYF), 204–224 (ISVF…SGVH), 256–276 (VVFL…FVGL), 285–305 (VVLG…FLSL), 325–345 (VYGI…IGSL), and 357–377 (MVKI…FLVL).

This sequence belongs to the NhaA Na(+)/H(+) (TC 2.A.33) antiporter family.

It is found in the cell inner membrane. It catalyses the reaction Na(+)(in) + 2 H(+)(out) = Na(+)(out) + 2 H(+)(in). Its function is as follows. Na(+)/H(+) antiporter that extrudes sodium in exchange for external protons. This chain is Na(+)/H(+) antiporter NhaA, found in Legionella pneumophila (strain Lens).